We begin with the raw amino-acid sequence, 325 residues long: Putative aryl-alcohol dehydrogenase C750.01 (325 aa).

This sequence belongs to the aldo/keto reductase family. Aldo/keto reductase 2 subfamily.

This chain is Putative aryl-alcohol dehydrogenase C750.01, found in Schizosaccharomyces pombe (strain 972 / ATCC 24843) (Fission yeast).